Here is a 205-residue protein sequence, read N- to C-terminus: Golgi to ER traffic protein 1 (205 aa).

Topologically, residues 1–3 (MDY) are lumenal. Residues 4–24 (WILLVLAFLVADKSWHLTGLL) traverse the membrane as a helical segment. The Cytoplasmic segment spans residues 25-96 (ATKLTSPERL…ATKARLAKLK (72 aa)). Residues 32-96 (ERLQQLIRER…ATKARLAKLK (65 aa)) are a coiled coil. Residues 97-117 (LLVVTVPFTALKFYKGKLPVY) traverse the membrane as a helical segment. Residues 118–156 (ALPKGMFPRFIEGTLEHGWLYMALAPLNMKQFSEGASVA) lie on the Lumenal side of the membrane. The helical transmembrane segment at 157–173 (VSLGIWLFALLRVLGAI) threads the bilayer. At 174–205 (EFVLETLREQNPQVATETAKVHARTAQAASAN) the chain is on the cytoplasmic side.

The protein belongs to the WRB/GET1 family. As to quaternary structure, component of the Golgi to ER traffic (GET) complex, which is composed of GET1, GET2 and GET3. Within the complex, GET1 and GET2 form a heterotetramer which is stabilized by phosphatidylinositol binding and which binds to the GET3 homodimer.

Its subcellular location is the endoplasmic reticulum membrane. The protein localises to the golgi apparatus membrane. Its function is as follows. Required for the post-translational delivery of tail-anchored (TA) proteins to the endoplasmic reticulum. Together with GET2, acts as a membrane receptor for soluble GET3, which recognizes and selectively binds the transmembrane domain of TA proteins in the cytosol. The GET complex cooperates with the HDEL receptor ERD2 to mediate the ATP-dependent retrieval of resident ER proteins that contain a C-terminal H-D-E-L retention signal from the Golgi to the ER. The protein is Golgi to ER traffic protein 1 of Eremothecium gossypii (strain ATCC 10895 / CBS 109.51 / FGSC 9923 / NRRL Y-1056) (Yeast).